A 166-amino-acid chain; its full sequence is Probable chemoreceptor glutamine deamidase CheD 1 (166 aa).

This sequence belongs to the CheD family.

The enzyme catalyses L-glutaminyl-[protein] + H2O = L-glutamyl-[protein] + NH4(+). Probably deamidates glutamine residues to glutamate on methyl-accepting chemotaxis receptors (MCPs), playing an important role in chemotaxis. The sequence is that of Probable chemoreceptor glutamine deamidase CheD 1 from Leptospira interrogans serogroup Icterohaemorrhagiae serovar copenhageni (strain Fiocruz L1-130).